A 266-amino-acid chain; its full sequence is Thymidylate synthase (266 aa).

DUMP is bound at residue R24. (6R)-5,10-methylene-5,6,7,8-tetrahydrofolate is bound at residue H54. Position 129-130 (129-130) interacts with dUMP; sequence RR. C149 (nucleophile) is an active-site residue. Residues 169–172, N180, and 210–212 contribute to the dUMP site; these read RSAD and HIY. Position 172 (D172) interacts with (6R)-5,10-methylene-5,6,7,8-tetrahydrofolate. Position 265 (A265) interacts with (6R)-5,10-methylene-5,6,7,8-tetrahydrofolate.

Belongs to the thymidylate synthase family. Bacterial-type ThyA subfamily. As to quaternary structure, homodimer.

The protein localises to the cytoplasm. The catalysed reaction is dUMP + (6R)-5,10-methylene-5,6,7,8-tetrahydrofolate = 7,8-dihydrofolate + dTMP. Its pathway is pyrimidine metabolism; dTTP biosynthesis. Functionally, catalyzes the reductive methylation of 2'-deoxyuridine-5'-monophosphate (dUMP) to 2'-deoxythymidine-5'-monophosphate (dTMP) while utilizing 5,10-methylenetetrahydrofolate (mTHF) as the methyl donor and reductant in the reaction, yielding dihydrofolate (DHF) as a by-product. This enzymatic reaction provides an intracellular de novo source of dTMP, an essential precursor for DNA biosynthesis. In Corynebacterium glutamicum (strain R), this protein is Thymidylate synthase.